Here is a 472-residue protein sequence, read N- to C-terminus: Alanine--anticapsin ligase (472 aa).

Glu109 is a binding site for Mg(2+). Residues Lys138 and Lys178 each contribute to the ATP site. The ATP-grasp domain maps to 142 to 355 (RAAFNRAGVK…MAQLLLDVLC (214 aa)). Residue Leu182 participates in Mg(2+) binding. Residues 184 to 185 (SS), 226 to 229 (EEFL), and Gln268 contribute to the ATP site. Residues Glu273 and 309–311 (HTE) each bind substrate. Glu311 and Glu324 together coordinate Mg(2+). 328-331 (RFAG) provides a ligand contact to substrate.

Monomer or homodimer. Mg(2+) is required as a cofactor.

The enzyme catalyses L-anticapsin + L-alanine + ATP = bacilysin + ADP + phosphate + H(+). The protein operates within antibiotic biosynthesis; bacilysin biosynthesis. In terms of biological role, part of the bacABCDEFG operon responsible for the biosynthesis of bacilysin, an irreversible inactivator of the glutaminase domain of glucosamine synthetase. Catalyzes the formation of alpha-dipeptides from various L-amino acids in the presence of ATP. In vivo catalyzes the ligation of L-alanine and L-anticapsin (epoxycyclohexanonyl-Ala) to produce the final bacilysin antibiotic (L-Ala-L-4S-cyclohexenonyl-Ala dipeptide). The protein is Alanine--anticapsin ligase of Bacillus subtilis.